The sequence spans 92 residues: RNA-binding protein Hfq (92 aa).

Positions 9-68 (DPFLNALRRERVPVSVYLVNGIKLQGTIESFDQFVVLLRNTVSQMVYKHAISTVVPARNV) constitute a Sm domain.

Belongs to the Hfq family. Homohexamer.

RNA chaperone that binds small regulatory RNA (sRNAs) and mRNAs to facilitate mRNA translational regulation in response to envelope stress, environmental stress and changes in metabolite concentrations. Also binds with high specificity to tRNAs. The protein is RNA-binding protein Hfq of Xylella fastidiosa (strain M12).